A 316-amino-acid polypeptide reads, in one-letter code: Delta(1)-pyrroline-2-carboxylate reductase (316 aa).

This sequence belongs to the ornithine cyclodeaminase/mu-crystallin family.

The catalysed reaction is L-proline + NAD(+) = 1-pyrroline-2-carboxylate + NADH + H(+). It carries out the reaction L-proline + NADP(+) = 1-pyrroline-2-carboxylate + NADPH + H(+). Its function is as follows. Catalyzes the reduction of Delta(1)-pyrroline-2-carboxylate (Pyr2C) to L-proline, using preferentially NADPH over NADH as the electron donor. Is likely involved in a degradation pathway that converts trans-3-hydroxy-L-proline (t3LHyp) to L-proline, which would allow P.denitrificans to grow on t3LHyp as a sole carbon source. This is Delta(1)-pyrroline-2-carboxylate reductase from Paracoccus denitrificans (strain Pd 1222).